The chain runs to 282 residues: UPF0759 protein YunF (282 aa).

Belongs to the UPF0759 family.

In Bacillus subtilis (strain 168), this protein is UPF0759 protein YunF (yunF).